The following is a 469-amino-acid chain: Protein RUFY3 (469 aa).

Phosphothreonine is present on residues threonine 5 and threonine 12. Serine 34 and serine 49 each carry phosphoserine. Threonine 51 is subject to Phosphothreonine. One can recognise an RUN domain in the interval aspartate 95–glutamate 227. Coiled coils occupy residues asparagine 271–glutamate 362 and lysine 422–lysine 463.

In terms of assembly, interacts with PAK1. Interacts (via C-terminus) with Ras-related Rab-5 proteins. Interacts (via C-terminus) with Ras-related Rap-2 proteins. Interacts with PIK3CA and PIK3R1. Interacts (via N-terminus) with FSCN1; this interaction induces neuron axon development. Interacts with DBN1. Interacts (via the second coiled coil) with GTP-, but not GDP-bound ARL8A and ARL8B. Interacts with dynactin/DCTN1 and the dynein intermediate chain DYNC1I1/2. Directly interacts with DYNC1LI1. Phosphorylated by PAK1. Isoform 1 is partially phosphorylated. In terms of tissue distribution, overexpressed in gastric cancer cells and tissues (at protein level).

The protein resides in the cytoplasm. Its subcellular location is the endomembrane system. It localises to the cell projection. The protein localises to the invadopodium. It is found in the perikaryon. The protein resides in the growth cone. Its subcellular location is the filopodium. It localises to the lamellipodium. The protein localises to the lysosome. Functionally, ARL8 effector that promotes the coupling of endolysosomes to dynein-dynactin for retrograde transport along microtubules. Acts by binding both GTP-bound ARL8 and dynein-dynactin. In nonneuronal cells, promotes concentration of endolysosomes in the juxtanuclear area. In hippocampal neurons, drives retrograde transport of endolysosomes from the axon to the soma. Plays a role in the generation of neuronal polarity formation and axon growth. Implicated in the formation of a single axon by developing neurons. May inhibit the formation of additional axons by inhibition of PI3K in minor neuronal processes. Plays a role in the formation of F-actin-enriched protrusive structures at the cell periphery. Plays a role in cytoskeletal organization by regulating the subcellular localization of FSCN1 and DBN1 at axonal growth cones. This chain is Protein RUFY3, found in Homo sapiens (Human).